The primary structure comprises 356 residues: Protein RecA (356 aa).

68–75 (GPESSGKT) lines the ATP pocket.

Belongs to the RecA family.

It localises to the cytoplasm. Functionally, can catalyze the hydrolysis of ATP in the presence of single-stranded DNA, the ATP-dependent uptake of single-stranded DNA by duplex DNA, and the ATP-dependent hybridization of homologous single-stranded DNAs. It interacts with LexA causing its activation and leading to its autocatalytic cleavage. This is Protein RecA from Clostridium botulinum (strain Alaska E43 / Type E3).